The chain runs to 409 residues: UDP-N-acetylglucosamine--N-acetylmuramyl-(pentapeptide) pyrophosphoryl-undecaprenol N-acetylglucosamine transferase (409 aa).

UDP-N-acetyl-alpha-D-glucosamine is bound by residues 11 to 13 (TGG), Asn125, Arg169, Ser199, and Gln299.

The protein belongs to the glycosyltransferase 28 family. MurG subfamily.

It is found in the cell membrane. It catalyses the reaction di-trans,octa-cis-undecaprenyl diphospho-N-acetyl-alpha-D-muramoyl-L-alanyl-D-glutamyl-meso-2,6-diaminopimeloyl-D-alanyl-D-alanine + UDP-N-acetyl-alpha-D-glucosamine = di-trans,octa-cis-undecaprenyl diphospho-[N-acetyl-alpha-D-glucosaminyl-(1-&gt;4)]-N-acetyl-alpha-D-muramoyl-L-alanyl-D-glutamyl-meso-2,6-diaminopimeloyl-D-alanyl-D-alanine + UDP + H(+). It participates in cell wall biogenesis; peptidoglycan biosynthesis. Functionally, cell wall formation. Catalyzes the transfer of a GlcNAc subunit on undecaprenyl-pyrophosphoryl-MurNAc-pentapeptide (lipid intermediate I) to form undecaprenyl-pyrophosphoryl-MurNAc-(pentapeptide)GlcNAc (lipid intermediate II). This chain is UDP-N-acetylglucosamine--N-acetylmuramyl-(pentapeptide) pyrophosphoryl-undecaprenol N-acetylglucosamine transferase, found in Clostridioides difficile (strain 630) (Peptoclostridium difficile).